We begin with the raw amino-acid sequence, 799 residues long: Protein phosphatase 1 regulatory subunit 3F (799 aa).

Positions 1 to 30 (MARTAPVEPPLRHPAPPSPAAGEPRASAEA) are disordered. At 1–772 (MARTAPVEPP…LTQTLGVLAG (772 aa)) the chain is on the cytoplasmic side. Residues 7–19 (VEPPLRHPAPPSP) are compositionally biased toward pro residues. S18 is subject to Phosphoserine. Residues 20–30 (AAGEPRASAEA) are compositionally biased toward low complexity. The PP1-binding motif signature appears at 36-39 (RVLF). Disordered stretches follow at residues 53 to 108 (RYRP…PVPA), 201 to 235 (SPPGAGVGGTGAGDPLLDPGLGLGPGQMSASSPDD), 332 to 353 (RRRPFEEEPRMRSADDNTLAEH), and 417 to 439 (ATCGLGGPPRDQASGPDASDRAA). Acidic residues predominate over residues 78 to 97 (ADEEDDGEDGDEGEEEEEAF). The CBM21 domain occupies 127 to 283 (LERLGRVMVE…NNHGRNYTVL (157 aa)). Over residues 334-353 (RPFEEEPRMRSADDNTLAEH) the composition is skewed to basic and acidic residues. Residue S545 is modified to Phosphoserine. Disordered stretches follow at residues 566 to 600 (KDTEDPDDEGEGEDGLSITPSSPEGGSPKESPPEI), 663 to 688 (SKSPGEAGTESQMEELPTERESSWVP), and 722 to 743 (PHVNSQEEEGGSLNLESPKRSP). Acidic residues predominate over residues 569 to 579 (EDPDDEGEGED). Residues 585-594 (PSSPEGGSPK) are compositionally biased toward low complexity. A phosphoserine mark is found at S587 and S592. Basic and acidic residues predominate over residues 679 to 688 (PTERESSWVP). A helical transmembrane segment spans residues 773–793 (LVMVPVALNSGVSLLVLVLCL). The Extracellular segment spans residues 794–799 (SLAWFS).

Highly expressed in brain (at protein level).

It localises to the membrane. Functionally, glycogen-targeting subunit for protein phosphatase 1 (PP1). This chain is Protein phosphatase 1 regulatory subunit 3F (Ppp1r3f), found in Mus musculus (Mouse).